The chain runs to 429 residues: Glutamate-1-semialdehyde 2,1-aminomutase (429 aa).

The residue at position 267 (Lys-267) is an N6-(pyridoxal phosphate)lysine.

This sequence belongs to the class-III pyridoxal-phosphate-dependent aminotransferase family. HemL subfamily. As to quaternary structure, homodimer. The cofactor is pyridoxal 5'-phosphate.

Its subcellular location is the cytoplasm. The catalysed reaction is (S)-4-amino-5-oxopentanoate = 5-aminolevulinate. It functions in the pathway porphyrin-containing compound metabolism; protoporphyrin-IX biosynthesis; 5-aminolevulinate from L-glutamyl-tRNA(Glu): step 2/2. This chain is Glutamate-1-semialdehyde 2,1-aminomutase, found in Xanthomonas campestris pv. campestris (strain 8004).